Reading from the N-terminus, the 1363-residue chain is MAPGVLLQPSQSELEAASPPKAAASLLQLTEEWDDTIRFYLNGTKVILDSVDPEITLLEYLRGIGLTGTKLGCAEGGCGACTVVVSQINPTTKKLYHASINACIAPLVAVDGKHVITVEGIGNVKNPHAIQQRLAIGNGSQCGFCTPGIVMSLYALLRNDPKPSEHAVEEAFDGNLCRCTGYRPILDAAQSFTSPIGCGKARANGGSGCCMEEQKGTNGCCKGSSEETTEDVKHKFASPDFIEYKPDTELIFPPSLWKHELRPLAFGNKRKKWYRPVTVQQLLEIKSIHPDAKLIGGSTETQIEIKFKQMRYGASVYLGDLAELRQFAFHDNYLEIGANISLTDLESVCDQAIERYGSARGQPFAAIKKQLRYFAGRQIRNVASPAGNLATASPISDLNPVFVATNTTLVARSLDKETEIPMTQFFRGYRSTALPPDAIISSLRIPTASEKGEYLRAYKQSKRKDDDIAIVNAALRVSLSSSNDVTSVSLVFGGMAPLTVSARNAEAFLTGKKFTDPATLEGTMGALEQDFNLKFGVPGGMATYRKSLALGFFYRFYHDVLSQIEARSSDLDNSVVAEIERAISTGEKDNEASAAYQQRVLGRAGPHLSALKQATGEAQYTDDIPAQKNELYGCMVLSTKAHAKLLSVNTEAALEIPGVIDYVDHKDLPSPRANWWGAPNCDEVFFAVDKVTTAGQPIGMILANTAKAAEEGARAVKVEYEELPVILSIEEAIEAQSFFERFRYIKNGDPESAFRDADHVFEGVSRMGGQEHFYLETQACVAIPKAEDGEMEIWSSTQNPTETQSYVAQVTGVAANKIVSRVKRLGGGFGGKETRSVQLAGICATAAAKVRRPVRCMLNRDEDIATSGQRHPFYCKWKVGVTREGKLLALDADVYANGGHTQDLSGAVVERSLSHIDNVYRFPNIYVRGRICKTNTVSNTAFRGFGGPQGLFFAESIISEVADHLDLQVEQLRILNMYEPGDMTHFNQELKDWHVPLMYDQVLQESEYFERRKAVEEYNRTHKWSKRGMAIIPTKFGISFTALFLNQAGALVHIYHDGSVLVAHGGVEMGQGLHTKMTMIAAEALGVPLSDVFISETATNTVANTSSTAASASSDLNGYAIYNACTQLNERLKPYREKMPNATLKDLAHAAYFDRVNLSAQGYYRTPDIGYTWGENKGQMFFYFTQGVTAAEVEIDTLTGDWTPLRADIKMDVGRTINPSIDYGQIEGAYIQGQGLFTTEESLWHRTTGQIFTKGPGNYKIPGFRDIPQIFNVSLLKDVEWENLRTIQRSRGVGEPPLFMGSAAFFAIRDALKAARKEWGVTDVLSLVSPATPERIRVSCADPIIERARVKAEEGEKSFFVAI.

One can recognise a 2Fe-2S ferredoxin-type domain in the interval 35–121 (DTIRFYLNGT…GKHVITVEGI (87 aa)). [2Fe-2S] cluster is bound by residues C73, C78, C81, C103, C142, C145, C177, and C179. The region spanning 266–450 (FGNKRKKWYR…SSLRIPTASE (185 aa)) is the FAD-binding PCMH-type domain. FAD-binding positions include 294–301 (LIGGSTET), F374, 384–388 (SPAGN), D397, and K459. Mo-molybdopterin contacts are provided by Q798 and F829. Positions 833 and 911 each coordinate substrate. R943 provides a ligand contact to Mo-molybdopterin. Substrate is bound by residues F945 and T1041. A1110 serves as a coordination point for Mo-molybdopterin. E1295 (proton acceptor) is an active-site residue.

The protein belongs to the xanthine dehydrogenase family. The cofactor is FAD. It depends on Mo-molybdopterin as a cofactor. [2Fe-2S] cluster is required as a cofactor.

Its subcellular location is the peroxisome. It catalyses the reaction xanthine + NAD(+) + H2O = urate + NADH + H(+). The catalysed reaction is hypoxanthine + NAD(+) + H2O = xanthine + NADH + H(+). In terms of biological role, key enzyme in purine degradation. Catalyzes the oxidation of hypoxanthine to xanthine. Catalyzes the oxidation of xanthine to uric acid. This Emericella nidulans (strain FGSC A4 / ATCC 38163 / CBS 112.46 / NRRL 194 / M139) (Aspergillus nidulans) protein is Xanthine dehydrogenase (hxA).